We begin with the raw amino-acid sequence, 436 residues long: Probable sodium/metabolite cotransporter BASS4, chloroplastic (436 aa).

The N-terminal 47 residues, 1 to 47 (MAIASTLASTQNPFLCLRQPPSPGNRSVVFRRCQDPCGRRWISRSIR), are a transit peptide targeting the chloroplast. Helical transmembrane passes span 109–129 (FLPL…TLGC), 131–151 (ADKY…SGLT), 157–177 (IGAA…ILLL), 195–215 (LVTG…GVAL), 225–245 (LALA…PFWV), 257–277 (FPTD…LIIG), 297–314 (LFSK…WIQV), 328–348 (VFLA…AFNA), and 403–423 (PCVA…NLWL).

This sequence belongs to the bile acid:sodium symporter (BASS) (TC 2.A.28) family.

The protein localises to the membrane. It is found in the plastid. The protein resides in the chloroplast envelope. Functionally, may function as sodium-coupled metabolite transporter across the chloroplast envelope. The sequence is that of Probable sodium/metabolite cotransporter BASS4, chloroplastic (BASS4) from Arabidopsis thaliana (Mouse-ear cress).